Here is a 526-residue protein sequence, read N- to C-terminus: NAD(P)H-quinone oxidoreductase chain 4 1 (526 aa).

A run of 14 helical transmembrane segments spans residues 7–27 (FPWL…IPLL), 35–55 (WYAL…FGWH), 86–106 (LSFP…VAAW), 114–134 (LFFF…LAQD), 135–155 (LLLF…LIAI), 168–188 (FILY…AMAF), 208–228 (ALQI…LPVF), 242–262 (SAPI…YGLI), 276–296 (FAPV…LAAL), 310–330 (IAHM…GLNG), 331–351 (ALLQ…LTGI), 374–396 (AFAL…GFVG), 417–437 (GIAL…LSML), and 463–483 (MAVA…PRLA).

Belongs to the complex I subunit 4 family.

It is found in the cellular thylakoid membrane. The catalysed reaction is a plastoquinone + NADH + (n+1) H(+)(in) = a plastoquinol + NAD(+) + n H(+)(out). The enzyme catalyses a plastoquinone + NADPH + (n+1) H(+)(in) = a plastoquinol + NADP(+) + n H(+)(out). Functionally, NDH-1 shuttles electrons from NAD(P)H, via FMN and iron-sulfur (Fe-S) centers, to quinones in the respiratory chain. The immediate electron acceptor for the enzyme in this species is believed to be plastoquinone. Couples the redox reaction to proton translocation (for every two electrons transferred, four hydrogen ions are translocated across the cytoplasmic membrane), and thus conserves the redox energy in a proton gradient. This is NAD(P)H-quinone oxidoreductase chain 4 1 from Synechococcus sp. (strain JA-3-3Ab) (Cyanobacteria bacterium Yellowstone A-Prime).